The chain runs to 698 residues: MIPVADLTEAEAARELERLAAEIARHDRLYHQQDAPEITDGEYDALVRRNNEIEAAFPELVRGDSPSAHVGAAPAEGFAKVTHALPMLSLGNVFSDDEAREFDQRIRRFLSLDGETTISYVAEPKIDGLSFSARYENGVYRRAATRGDGTTGEDITANLATLTDLPQRLTGDGPVPEVLEVRGEVFMTKADFRALNQRQIDAGAKPFANPRNAAAGSLRQLDPEITRSRSLSLFAYASGEVKGLEVESHHAFLERLKTWGFPVNPQTRPCQGVEDLIEATHALALQRAALDYDIDGVVYKVDRVDWQKRLGFVSRAPRWAIARKFPAERAQTTVKAIQIQVGRTGTLTPVAILEPVTVGGVVVGRATLHNEDEIARKDVRIGDMVTIQRAGDVIPQVVEVLLDQRPADSAPFVFPETCPVCGSHAVRQEGEVARRCAGGLICSAQAVERLKHFVSRDAFDIEGLGGKHIETFHNEGLITQPADIFALEAKDNEPGALQHLRSREGWGPKSAENLFKAITARKTIPLDRFIYALGIRQVGQATARLLAGHYASFAAWRKAMDEAQTEGSEAFADLQNIESIGPSVARDLVAFFGEEHNRAALDALIDAGVEVLDFARPQAAGDSPLAGKTVVFTGTLDTMSRGEAKARALALGAKVTGSVSAKTDYVVVGADAGSKEKKARELGLTVLSEAEFRAMSGG.

NAD(+) contacts are provided by residues 40–44 (DGEYD), 89–90 (SL), and E123. The N6-AMP-lysine intermediate role is filled by K125. NAD(+) contacts are provided by R146, E184, K300, and K324. Residues C418, C421, C436, and C442 each coordinate Zn(2+). Residues 620–698 (AGDSPLAGKT…EAEFRAMSGG (79 aa)) form the BRCT domain.

It belongs to the NAD-dependent DNA ligase family. LigA subfamily. Mg(2+) serves as cofactor. It depends on Mn(2+) as a cofactor.

It catalyses the reaction NAD(+) + (deoxyribonucleotide)n-3'-hydroxyl + 5'-phospho-(deoxyribonucleotide)m = (deoxyribonucleotide)n+m + AMP + beta-nicotinamide D-nucleotide.. DNA ligase that catalyzes the formation of phosphodiester linkages between 5'-phosphoryl and 3'-hydroxyl groups in double-stranded DNA using NAD as a coenzyme and as the energy source for the reaction. It is essential for DNA replication and repair of damaged DNA. The protein is DNA ligase of Rhodospirillum rubrum (strain ATCC 11170 / ATH 1.1.1 / DSM 467 / LMG 4362 / NCIMB 8255 / S1).